Here is a 491-residue protein sequence, read N- to C-terminus: Cytochrome P450 2B9 (491 aa).

Ser128 carries the post-translational modification Phosphoserine; by PKA. Position 436 (Cys436) interacts with heme.

Belongs to the cytochrome P450 family. It depends on heme as a cofactor.

The protein localises to the endoplasmic reticulum membrane. It is found in the microsome membrane. It catalyses the reaction an organic molecule + reduced [NADPH--hemoprotein reductase] + O2 = an alcohol + oxidized [NADPH--hemoprotein reductase] + H2O + H(+). Cytochromes P450 are a group of heme-thiolate monooxygenases. In liver microsomes, this enzyme is involved in an NADPH-dependent electron transport pathway. It oxidizes a variety of structurally unrelated compounds, including steroids, fatty acids, and xenobiotics. The sequence is that of Cytochrome P450 2B9 (Cyp2b9) from Mus musculus (Mouse).